The chain runs to 80 residues: Small ribosomal subunit protein uS17 (80 aa).

This sequence belongs to the universal ribosomal protein uS17 family. In terms of assembly, part of the 30S ribosomal subunit.

Functionally, one of the primary rRNA binding proteins, it binds specifically to the 5'-end of 16S ribosomal RNA. This Cereibacter sphaeroides (strain ATCC 17029 / ATH 2.4.9) (Rhodobacter sphaeroides) protein is Small ribosomal subunit protein uS17.